Consider the following 515-residue polypeptide: Centromere protein T (515 aa).

Disordered regions lie at residues 24–156 (ADSR…KRKQ) and 271–411 (LSGK…DPHK). The segment covering 29-44 (PMRRRSTRINAQRRRS) has biased composition (basic residues). A compositionally biased stretch (polar residues) spans 45-58 (QTPYSNRQGSQTKT). T86 is subject to Phosphothreonine. A flexible stalk domain region spans residues 94-375 (ILLTAPESST…DSLPAEQPPP (282 aa)). Polar residues predominate over residues 296–306 (SSGTRLQSRMS). A phosphoserine mark is found at S313, S333, S345, S346, S357, and S376.

It belongs to the CENP-T/CNN1 family. In terms of assembly, component of the CENPA-CAD complex, composed of CENPI, CENPK, CENPL, CENPO, CENPP, CENPQ, CENPR and CENPS. The CENPA-CAD complex is probably recruited on centromeres by the CENPA-NAC complex, at least composed of CENPA, CENPC, CENPH, CENPM, CENPN, CENPT and CENPU. Identified in a centromeric complex containing histones H2A, H2B, H3 and H4, and at least CENPA, CENPB, CENPC, CENPT, CENPN, HJURP, SUPT16H, SSRP1 and RSF1. Interacts (via N-terminus) with the NDC80 complex. Heterodimer with CENPW; this dimer coassembles with CENPS-CENPX heterodimers at centromeres to form the tetrameric CENP-T-W-S-X complex. Post-translationally, dynamically phosphorylated during the cell cycle. Phosphorylated during G2 phase, metaphase and anaphase, but not during telophase or G1 phase.

It is found in the nucleus. The protein localises to the chromosome. The protein resides in the centromere. It localises to the kinetochore. In terms of biological role, component of the CENPA-NAC (nucleosome-associated) complex, a complex that plays a central role in assembly of kinetochore proteins, mitotic progression and chromosome segregation. The CENPA-NAC complex recruits the CENPA-CAD (nucleosome distal) complex and may be involved in incorporation of newly synthesized CENPA into centromeres. Part of a nucleosome-associated complex that binds specifically to histone H3-containing nucleosomes at the centromere, as opposed to nucleosomes containing CENPA. Component of the heterotetrameric CENP-T-W-S-X complex that binds and supercoils DNA, and plays an important role in kinetochore assembly. CENPT has a fundamental role in kinetochore assembly and function. It is one of the inner kinetochore proteins, with most further proteins binding downstream. Required for normal chromosome organization and normal progress through mitosis. The polypeptide is Centromere protein T (Cenpt) (Mus musculus (Mouse)).